The following is a 764-amino-acid chain: Zygote defective protein 12 (764 aa).

A compositionally biased stretch (polar residues) spans M1–A20. The interval M1–R33 is disordered. The segment at M1–G236 is interaction with dli-1. In terms of domain architecture, Calponin-homology (CH) spans R43 to Q169. Coiled coils occupy residues L244–T405 and G436–I692. A helical membrane pass occupies residues A732–I752.

This sequence belongs to the hook family. As to quaternary structure, homodimer. Interacts with the dynein subunit dli-1 via its N-terminus. May interact with microtubules.

The protein localises to the nucleus membrane. The protein resides in the cytoplasm. Its subcellular location is the cytoskeleton. It localises to the microtubule organizing center. It is found in the centrosome. Its function is as follows. Cytoskeletal linker protein, which is essential for attachment of the centrosome to the nucleus. Required for dynein localization to the nuclear envelope. The chain is Zygote defective protein 12 (zyg-12) from Caenorhabditis briggsae.